A 496-amino-acid chain; its full sequence is Cobyric acid synthase (496 aa).

One can recognise a GATase cobBQ-type domain in the interval 255–445 (DLEIAVLKLP…LHGLLDNGPW (191 aa)). The Nucleophile role is filled by Cys336. Residue His437 is part of the active site.

This sequence belongs to the CobB/CobQ family. CobQ subfamily.

It participates in cofactor biosynthesis; adenosylcobalamin biosynthesis. Its function is as follows. Catalyzes amidations at positions B, D, E, and G on adenosylcobyrinic A,C-diamide. NH(2) groups are provided by glutamine, and one molecule of ATP is hydrogenolyzed for each amidation. The polypeptide is Cobyric acid synthase (Parasynechococcus marenigrum (strain WH8102)).